The chain runs to 426 residues: Serine hydroxymethyltransferase (426 aa).

Residues L122 and 126 to 128 each bind (6S)-5,6,7,8-tetrahydrofolate; that span reads GHL. K231 is modified (N6-(pyridoxal phosphate)lysine). (6S)-5,6,7,8-tetrahydrofolate contacts are provided by residues E247 and 355 to 357; that span reads SPF.

Belongs to the SHMT family. Homodimer. Pyridoxal 5'-phosphate is required as a cofactor.

It is found in the cytoplasm. It carries out the reaction (6R)-5,10-methylene-5,6,7,8-tetrahydrofolate + glycine + H2O = (6S)-5,6,7,8-tetrahydrofolate + L-serine. The protein operates within one-carbon metabolism; tetrahydrofolate interconversion. It participates in amino-acid biosynthesis; glycine biosynthesis; glycine from L-serine: step 1/1. Catalyzes the reversible interconversion of serine and glycine with tetrahydrofolate (THF) serving as the one-carbon carrier. This reaction serves as the major source of one-carbon groups required for the biosynthesis of purines, thymidylate, methionine, and other important biomolecules. Also exhibits THF-independent aldolase activity toward beta-hydroxyamino acids, producing glycine and aldehydes, via a retro-aldol mechanism. This chain is Serine hydroxymethyltransferase, found in Cyanothece sp. (strain PCC 7425 / ATCC 29141).